The following is a 354-amino-acid chain: Caffeate O-methyltransferase-like protein 2 (354 aa).

Residues G198, D221, M242, and K255 each coordinate S-adenosyl-L-homocysteine. The active-site Proton acceptor is the H259. Catalysis depends on residues E287 and E319.

This sequence belongs to the class I-like SAM-binding methyltransferase superfamily. Cation-independent O-methyltransferase family. COMT subfamily.

This Oryza sativa subsp. japonica (Rice) protein is Caffeate O-methyltransferase-like protein 2.